Here is a 608-residue protein sequence, read N- to C-terminus: DNA mismatch repair protein MutL (608 aa).

This sequence belongs to the DNA mismatch repair MutL/HexB family.

Functionally, this protein is involved in the repair of mismatches in DNA. It is required for dam-dependent methyl-directed DNA mismatch repair. May act as a 'molecular matchmaker', a protein that promotes the formation of a stable complex between two or more DNA-binding proteins in an ATP-dependent manner without itself being part of a final effector complex. This Anaeromyxobacter dehalogenans (strain 2CP-C) protein is DNA mismatch repair protein MutL.